A 303-amino-acid chain; its full sequence is Suppressor of silencing P0 (303 aa).

This sequence belongs to the polerovirus P0 protein family.

In terms of biological role, suppressor of RNA-mediated gene silencing. This Pea enation mosaic virus-1 (strain WSG) (PEMV-1) protein is Suppressor of silencing P0.